A 390-amino-acid chain; its full sequence is LL-diaminopimelate aminotransferase (390 aa).

Residues Tyr13, Gly38, Lys102, Tyr126, and Asn176 each coordinate substrate. Pyridoxal 5'-phosphate contacts are provided by residues 101 to 102 (SK), Tyr126, Asn176, Tyr207, and 235 to 237 (SVS). Lys238 bears the N6-(pyridoxal phosphate)lysine mark. A pyridoxal 5'-phosphate-binding site is contributed by Arg246. A substrate-binding site is contributed by Arg364.

The protein belongs to the class-I pyridoxal-phosphate-dependent aminotransferase family. LL-diaminopimelate aminotransferase subfamily. As to quaternary structure, homodimer. Requires pyridoxal 5'-phosphate as cofactor.

The enzyme catalyses (2S,6S)-2,6-diaminopimelate + 2-oxoglutarate = (S)-2,3,4,5-tetrahydrodipicolinate + L-glutamate + H2O + H(+). The protein operates within amino-acid biosynthesis; L-lysine biosynthesis via DAP pathway; LL-2,6-diaminopimelate from (S)-tetrahydrodipicolinate (aminotransferase route): step 1/1. In terms of biological role, involved in the synthesis of meso-diaminopimelate (m-DAP or DL-DAP), required for both lysine and peptidoglycan biosynthesis. Catalyzes the direct conversion of tetrahydrodipicolinate to LL-diaminopimelate. Is also able to catalyze the reverse reaction in vitro, i.e. the transamination of LL-diaminopimelate with 2-oxoglutarate to produce tetrahydrodipicolinate and glutamate. Can also use m-DAP instead of LL-DAP as the amino-group donor, and oxaloacetate instead of 2-oxoglutarate as the amino-group acceptor. The chain is LL-diaminopimelate aminotransferase from Moorella thermoacetica (strain ATCC 39073 / JCM 9320).